The following is a 128-amino-acid chain: Small ribosomal subunit protein uS11 (128 aa).

Belongs to the universal ribosomal protein uS11 family. As to quaternary structure, part of the 30S ribosomal subunit. Interacts with proteins S7 and S18. Binds to IF-3.

Located on the platform of the 30S subunit, it bridges several disparate RNA helices of the 16S rRNA. Forms part of the Shine-Dalgarno cleft in the 70S ribosome. The protein is Small ribosomal subunit protein uS11 of Phytoplasma australiense.